The sequence spans 325 residues: UPF0285 protein MA_3856 (325 aa).

This sequence belongs to the UPF0285 family.

In Methanosarcina acetivorans (strain ATCC 35395 / DSM 2834 / JCM 12185 / C2A), this protein is UPF0285 protein MA_3856.